Here is a 282-residue protein sequence, read N- to C-terminus: Cell division protein FtsQ (282 aa).

The Cytoplasmic portion of the chain corresponds to 1–30 (MINIGPPKKRRLRRKGNRFKKTRRVIPWRR). The chain crosses the membrane as a helical span at residues 31 to 51 (LMIGALWGTMALASLGMVVAV). The Periplasmic portion of the chain corresponds to 52 to 282 (ACFAGQMLFA…LDAGELRGKG (231 aa)). The region spanning 65 to 133 (FKVERIQVEN…DQLVIRVDER (69 aa)) is the POTRA domain.

The protein belongs to the FtsQ/DivIB family. FtsQ subfamily.

Its subcellular location is the cell inner membrane. Essential cell division protein. The sequence is that of Cell division protein FtsQ from Syntrophotalea carbinolica (strain DSM 2380 / NBRC 103641 / GraBd1) (Pelobacter carbinolicus).